The following is a 412-amino-acid chain: Inositol polyphosphate-5-phosphatase A (412 aa).

Cys-409 carries the S-farnesyl cysteine lipid modification. Positions 410 to 412 (VVQ) are cleaved as a propeptide — removed in mature form.

It belongs to the inositol 1,4,5-trisphosphate 5-phosphatase type I family. Interacts with TASOR. In terms of processing, isoprenylation at Cys-409 is required for localization at the membrane. As to expression, expressed at high levels in cerebellar Purkinje cells (at protein level). Expressed in Sertoli cells of the testis.

It localises to the cell membrane. Its subcellular location is the cell projection. The protein resides in the dendrite. The catalysed reaction is 1D-myo-inositol 1,4,5-trisphosphate + H2O = 1D-myo-inositol 1,4-bisphosphate + phosphate. The enzyme catalyses 1D-myo-inositol 1,3,4,5-tetrakisphosphate + H2O = 1D-myo-inositol 1,3,4-trisphosphate + phosphate. Functionally, phosphatase that specifically hydrolyzes the 5-phosphate of inositol 1,4,5-trisphosphate to inositol 1,4-bisphosphate, and inositol 1,3,4,5-tetrasphosphate to inositol 1,3,4-trisphosphate. Plays a crucial role in the survival of cerebellar Purkinje cells. This Mus musculus (Mouse) protein is Inositol polyphosphate-5-phosphatase A (Inpp5a).